We begin with the raw amino-acid sequence, 476 residues long: Glycogen synthase (476 aa).

K15 serves as a coordination point for ADP-alpha-D-glucose.

Belongs to the glycosyltransferase 1 family. Bacterial/plant glycogen synthase subfamily.

It catalyses the reaction [(1-&gt;4)-alpha-D-glucosyl](n) + ADP-alpha-D-glucose = [(1-&gt;4)-alpha-D-glucosyl](n+1) + ADP + H(+). It functions in the pathway glycan biosynthesis; glycogen biosynthesis. Functionally, synthesizes alpha-1,4-glucan chains using ADP-glucose. This Bacillus cereus (strain ATCC 14579 / DSM 31 / CCUG 7414 / JCM 2152 / NBRC 15305 / NCIMB 9373 / NCTC 2599 / NRRL B-3711) protein is Glycogen synthase.